The sequence spans 386 residues: MLIIFLFFYFCYGFNEPLNVVSHLNHDWFLFGDSRSDCNHINNLKIKNFDYLDIHPSLCNNGKISSSAGDSIFKSFHFTRFYNYTGEGDQIIFYEGVNFNPYHRFKCFPNGSNDVWLLNKVRFYRALYSNMAFFRYLTFVDIPYNVSLSKFNSCKSDILSLNNPIFINYSKEVYFTLLGCSLYLVPLCLFKSNFSQYYYNIDTGSVYGFSNVVYPDLDCIYISLKPGSYKVSTTAPFLSLPTKALCFDKSKQFVPVQVVDSRWNNERASDISLSVACQLPYCYFRNSSANYVGKYDINHGDSGFISILSGLLYNVSCISYYGVFLYDNFTSIWPYYSFGRCPTSSIIKHPICVYDFLPIILQGILLCLALLFVVFLLFLLYNDKSH.

The N-terminal stretch at 1–11 (MLIIFLFFYFC) is a signal peptide. The segment at 1–121 (MLIIFLFFYF…SNDVWLLNKV (121 aa)) is esterase domain 1. Residues 12–359 (YGFNEPLNVV…PICVYDFLPI (348 aa)) are Virion surface-facing. Ser34 acts as the Nucleophile in catalysis. Residues Cys38 and Cys59 are joined by a disulfide bond. Asn83, Asn110, Asn145, and Asn168 each carry an N-linked (GlcNAc...) asparagine; by host glycan. An intrachain disulfide couples Cys107 to Cys154. Residues 122–236 (RFYRALYSNM…GSYKVSTTAP (115 aa)) form a receptor binding region. Cystine bridges form between Cys180–Cys246, Cys188–Cys219, and Cys277–Cys282. Residues 237 to 349 (FLSLPTKALC…RCPTSSIIKH (113 aa)) form an esterase domain 2 region. Asn286 carries an N-linked (GlcNAc...) asparagine; by host glycan. Catalysis depends on charge relay system residues Asp296 and His299. A disulfide bridge connects residues Cys317 and Cys341. The N-linked (GlcNAc...) asparagine; by host glycan is linked to Asn328. A helical transmembrane segment spans residues 360–380 (ILQGILLCLALLFVVFLLFLL). The Intravirion portion of the chain corresponds to 381-386 (YNDKSH).

It belongs to the influenza type C/coronaviruses hemagglutinin-esterase family. As to quaternary structure, homodimer; disulfide-linked. Forms a complex with the M protein in the pre-Golgi. Associates then with S-M complex to form a ternary complex S-M-HE. Post-translationally, N-glycosylated in the host RER.

It localises to the virion membrane. The protein resides in the host cell membrane. It carries out the reaction N-acetyl-9-O-acetylneuraminate + H2O = N-acetylneuraminate + acetate + H(+). The enzyme catalyses N-acetyl-4-O-acetylneuraminate + H2O = N-acetylneuraminate + acetate + H(+). Functionally, structural protein that makes short spikes at the surface of the virus. Contains receptor binding and receptor-destroying activities. Mediates de-O-acetylation of N-acetyl-4-O-acetylneuraminic acid, which is probably the receptor determinant recognized by the virus on the surface of erythrocytes and susceptible cells. This receptor-destroying activity is important for virus release as it probably helps preventing self-aggregation and ensures the efficient spread of the progeny virus from cell to cell. May serve as a secondary viral attachment protein for initiating infection, the spike protein being the major one. May become a target for both the humoral and the cellular branches of the immune system. The polypeptide is Hemagglutinin-esterase (Homo sapiens (Human)).